A 575-amino-acid chain; its full sequence is Proline--tRNA ligase 1 (575 aa).

The protein belongs to the class-II aminoacyl-tRNA synthetase family. ProS type 1 subfamily. Homodimer.

The protein localises to the cytoplasm. The catalysed reaction is tRNA(Pro) + L-proline + ATP = L-prolyl-tRNA(Pro) + AMP + diphosphate. In terms of biological role, catalyzes the attachment of proline to tRNA(Pro) in a two-step reaction: proline is first activated by ATP to form Pro-AMP and then transferred to the acceptor end of tRNA(Pro). As ProRS can inadvertently accommodate and process non-cognate amino acids such as alanine and cysteine, to avoid such errors it has two additional distinct editing activities against alanine. One activity is designated as 'pretransfer' editing and involves the tRNA(Pro)-independent hydrolysis of activated Ala-AMP. The other activity is designated 'posttransfer' editing and involves deacylation of mischarged Ala-tRNA(Pro). The misacylated Cys-tRNA(Pro) is not edited by ProRS. The polypeptide is Proline--tRNA ligase 1 (Anaeromyxobacter dehalogenans (strain 2CP-C)).